The following is a 370-amino-acid chain: Aminomethyltransferase (370 aa).

It belongs to the GcvT family. The glycine cleavage system is composed of four proteins: P, T, L and H.

It carries out the reaction N(6)-[(R)-S(8)-aminomethyldihydrolipoyl]-L-lysyl-[protein] + (6S)-5,6,7,8-tetrahydrofolate = N(6)-[(R)-dihydrolipoyl]-L-lysyl-[protein] + (6R)-5,10-methylene-5,6,7,8-tetrahydrofolate + NH4(+). Functionally, the glycine cleavage system catalyzes the degradation of glycine. This chain is Aminomethyltransferase, found in Clostridium botulinum (strain Okra / Type B1).